A 327-amino-acid polypeptide reads, in one-letter code: Zinc transport protein ZntB (327 aa).

The Cytoplasmic segment spans residues 1–271; that stretch reads MESFAGKELQ…AMNRRTYTMS (271 aa). A helical transmembrane segment spans residues 272 to 292; that stretch reads LLAMVFLPTTFLTGLFGVNLG. The Periplasmic portion of the chain corresponds to 293 to 300; that stretch reads GIPGGDAP. A helical transmembrane segment spans residues 301-321; the sequence is FGFFTFCLMLVILVGGVAWWL. Topologically, residues 322–327 are cytoplasmic; the sequence is KRSKWL.

It belongs to the CorA metal ion transporter (MIT) (TC 1.A.35) family.

The protein resides in the cell inner membrane. The catalysed reaction is Zn(2+)(out) + H(+)(out) = Zn(2+)(in) + H(+)(in). Zinc transporter. Acts as a Zn(2+):proton symporter, which likely mediates zinc ion uptake. The sequence is that of Zinc transport protein ZntB from Pectobacterium atrosepticum (strain SCRI 1043 / ATCC BAA-672) (Erwinia carotovora subsp. atroseptica).